Here is a 304-residue protein sequence, read N- to C-terminus: Probable aquaporin NIP5-1 (304 aa).

The next 2 helical transmembrane spans lie at 80 to 100 (LGAE…GPIV) and 106 to 126 (GAET…IIIL). The short motif at 137–139 (NPS) is the NPA 1 element. The next 3 membrane-spanning stretches (helical) occupy residues 157–177 (AYIA…KGVF), 195–215 (AFAL…AVAT), and 219–239 (AVGE…ILVA). Residues 248 to 250 (NPV) carry the NPA 2 motif. A helical transmembrane segment spans residues 266–286 (WVYLVAPTLGAISGAAVYTGV). At serine 301 the chain carries Phosphoserine.

The protein belongs to the MIP/aquaporin (TC 1.A.8) family. NIP (TC 1.A.8.12) subfamily. Expressed in rosette leaves.

It localises to the cell membrane. Boric acid transporter. Low water transport activity. Plays an important role as plasma membrane boric acid channel for the boron uptake required for plant growth and development under boron limitation. The sequence is that of Probable aquaporin NIP5-1 (NIP5-1) from Arabidopsis thaliana (Mouse-ear cress).